A 126-amino-acid polypeptide reads, in one-letter code: Large ribosomal subunit protein bL20 (126 aa).

This sequence belongs to the bacterial ribosomal protein bL20 family.

Binds directly to 23S ribosomal RNA and is necessary for the in vitro assembly process of the 50S ribosomal subunit. It is not involved in the protein synthesizing functions of that subunit. In Acholeplasma laidlawii (strain PG-8A), this protein is Large ribosomal subunit protein bL20.